We begin with the raw amino-acid sequence, 352 residues long: tRNA-specific 2-thiouridylase MnmA (352 aa).

ATP is bound by residues 6-13 (AMSGGVDS) and leucine 32. The active-site Nucleophile is the cysteine 101. The cysteines at positions 101 and 194 are disulfide-linked. ATP is bound at residue glycine 125. Residues 144–146 (KDQ) are interaction with tRNA. The active-site Cysteine persulfide intermediate is the cysteine 194.

Belongs to the MnmA/TRMU family.

It is found in the cytoplasm. It catalyses the reaction S-sulfanyl-L-cysteinyl-[protein] + uridine(34) in tRNA + AH2 + ATP = 2-thiouridine(34) in tRNA + L-cysteinyl-[protein] + A + AMP + diphosphate + H(+). Catalyzes the 2-thiolation of uridine at the wobble position (U34) of tRNA, leading to the formation of s(2)U34. The polypeptide is tRNA-specific 2-thiouridylase MnmA (Frankia casuarinae (strain DSM 45818 / CECT 9043 / HFP020203 / CcI3)).